The sequence spans 422 residues: MNKNSGKDYESIQGKIKSKAEIEDSVILDQDTFQGKGEEKTKLDELIRWEAEKNDLLKLIDNVGNDEVFTPVETCQRMLDELFPEDHEVWSNPDLKWLNPCDKNGVFFREIALRLDKGLTKIIPDEYARKKHIMTKMLFSIGLTKFTSLMVRRTLYYCIKANKRKTSEDEGCAIANGARFNNEFGNVVTPYKEHYFGKESKSKNCHFCGTNKNSKYVNSMTEEKYAYDFIHLNSDEYENYFKTNFGVMKFDVIIGNPPYQLSNGSGSDGNGAKAIFQDFVLKAIDLEPKYLAMIIPAKWMISAENIFLNLRDKLKKNKDIKEINIFFDSKDCFPKREIKGGICYFIWQNNYQGKTLINTKFSKKGKSTEIDSSKRNLFVSVLNNTEQIIFRKRIWQDIYTKIDSISASEMKNTHTEREQFRS.

This sequence belongs to the N(4)/N(6)-methyltransferase family.

The enzyme catalyses a 2'-deoxyadenosine in DNA + S-adenosyl-L-methionine = an N(6)-methyl-2'-deoxyadenosine in DNA + S-adenosyl-L-homocysteine + H(+). This is an uncharacterized protein from Mycoplasma pneumoniae (strain ATCC 29342 / M129 / Subtype 1) (Mycoplasmoides pneumoniae).